Consider the following 88-residue polypeptide: Phosphocarrier protein HPr (88 aa).

One can recognise an HPr domain in the interval 1–88 (MEQKSYVIID…DILSKEGLTK (88 aa)). The active-site Pros-phosphohistidine intermediate is histidine 15. A Phosphoserine; by HPrK/P modification is found at serine 46.

The protein belongs to the HPr family.

Its subcellular location is the cytoplasm. Phosphorylation on Ser-46 inhibits the phosphoryl transfer from enzyme I to HPr. Its function is as follows. General (non sugar-specific) component of the phosphoenolpyruvate-dependent sugar phosphotransferase system (sugar PTS). This major carbohydrate active-transport system catalyzes the phosphorylation of incoming sugar substrates concomitantly with their translocation across the cell membrane. The phosphoryl group from phosphoenolpyruvate (PEP) is transferred to the phosphoryl carrier protein HPr by enzyme I. Phospho-HPr then transfers it to the PTS EIIA domain. This is Phosphocarrier protein HPr (ptsH) from Staphylococcus xylosus.